Consider the following 202-residue polypeptide: Small ribosomal subunit protein uS4c (202 aa).

One can recognise an S4 RNA-binding domain in the interval 90-148 (MRLDNVIFRLGMSSTIPGARQLVNHRHIMINDEMVDTPGYNCKPRDIITLKNISESRSG).

It belongs to the universal ribosomal protein uS4 family. As to quaternary structure, part of the 30S ribosomal subunit. Contacts protein S5. The interaction surface between S4 and S5 is involved in control of translational fidelity.

The protein localises to the plastid. It is found in the chloroplast. Functionally, one of the primary rRNA binding proteins, it binds directly to 16S rRNA where it nucleates assembly of the body of the 30S subunit. Its function is as follows. With S5 and S12 plays an important role in translational accuracy. The chain is Small ribosomal subunit protein uS4c (rps4) from Haplomitrium hookeri (Hooker's flapwort).